Reading from the N-terminus, the 358-residue chain is Vanillin synthase (358 aa).

The first 21 residues, 1 to 21 (MARLLLLLVGVLIACAAGARA), serve as a signal peptide directing secretion. A propeptide spans 22–140 (GSEFLAEDNP…RGNHKLTSAI (119 aa)) (activation peptide). N-linked (GlcNAc...) asparagine glycosylation occurs at N125. Intrachain disulfides connect C162–C205 and C196–C238. Residue C165 is part of the active site. N-linked (GlcNAc...) asparagine glycosylation occurs at N254. Cysteines 296 and 346 form a disulfide. Active-site residues include H305 and N325.

It belongs to the peptidase C1 family.

The catalysed reaction is (E)-ferulate + H2O = vanillin + acetate. It carries out the reaction 4-O-beta-D-glucosyl-trans-ferulate + H2O = 4-O-beta-D-glucosyl-vanillin + acetate. It functions in the pathway aromatic compound metabolism; phenylpropanoid biosynthesis. Involved in the biosynthesis of vanillin and derivative natural products. Catalyzes the double carbon bond cleavage of ferulic acid to vanillin and of respective glucosides. The chain is Vanillin synthase from Glechoma hederacea (Ground-ivy).